The chain runs to 380 residues: E3 ubiquitin-protein ligase PHF7 (380 aa).

The disordered stretch occupies residues 1-23 (MRTIKEKKEHPRLRKTARTKKVT). Basic residues predominate over residues 10–23 (HPRLRKTARTKKVT). The segment at 30-68 (GPVCLLCFQEPGDPEKLGEFLQKDNLCVHYFCLILSSKL) adopts a C2HC pre-PHD-type zinc-finger fold. C33, C36, H58, and C61 together coordinate Zn(2+). Residues 67–92 (KLPQKGQPNRGLHGFMPEDIKKEAAR) form a required for interaction and ubiquitination of the nucleosome core particle region. Residues 96–145 (KVCFVCKRKGAAIRCQKDQCVQNFHLPCGQERGCLSQFFGEYKSYCGKHR) form a PHD-type zinc finger. Zn(2+) is bound by residues C98, C101, C110, C115, H120, C123, C141, H144, C159, C162, C178, C179, H185, C188, C203, C206, C247, C252, C272, C275, H281, C284, C296, and C299. Residues 150–306 (IHQRSFGESC…NECLPASTED (157 aa)) are required for interaction with ubiquitinated UBE2D2. An RING-type; degenerate zinc finger spans residues 159–207 (CVLCCEDLSRASVENIRSPCCSQAIYHRKCIQKYAHTSAKHFFKCPQCN). The interval 243–300 (RYQHCDAPICLYEQGRDSFEDEGRWRLILCATCGSHGTHRDCSSLRPNSKKWECNECL) is required for association with and ubiquitination of H3. Positions 352–367 (EKPESSSGSSCQSWRS) are enriched in low complexity. A disordered region spans residues 352 to 380 (EKPESSSGSSCQSWRSKGIKVTKDCKKSK).

As to quaternary structure, interacts with MEF2C; the interaction promotes MEF2C binding to its transcription targets. Interacts with GATA4; the interaction promotes GATA4 binding to its transcription targets. Interacts with UBE2D2; the interaction inhibits cleavage of PHF7 and promotes association of the complex with the nucleosome core particle.

It is found in the nucleus. It catalyses the reaction S-ubiquitinyl-[E2 ubiquitin-conjugating enzyme]-L-cysteine + [acceptor protein]-L-lysine = [E2 ubiquitin-conjugating enzyme]-L-cysteine + N(6)-ubiquitinyl-[acceptor protein]-L-lysine.. It participates in protein modification; protein ubiquitination. E3 ubiquitin-protein ligase which ubiquitinates histone H3 at 'Lys-14'. Required for male fertility, via inhibition of SPOP-mediated BRDT degradation when in the presence of acetylated histone H4 in early condensing spermatids. Stabilization of BRDT allows it to facilitate histone removal in early condensing spermatids and promote the progression of histone-to-protamine exchange. Promotes the expression of steroidogenesis proteins in the testes, and as a result plays a role in maintaining testosterone levels and repressing osteoclastogenesis. Promotes transcription of cardiac enhancer genes by facilitating binding of cardiac transcription factors such as MEF2C and GATA4 to target gene promoters. Ubiquitinates histone H4. Ubiquitinates histone H2A and H3 as part of the nucleosome core particle. The chain is E3 ubiquitin-protein ligase PHF7 from Rattus norvegicus (Rat).